The sequence spans 132 residues: Fluoride-specific ion channel FluC (132 aa).

The next 4 helical transmembrane spans lie at 5 to 25 (LYIA…SGLV), 32 to 52 (TFPW…GFFA), 70 to 90 (FVMT…LQTL), and 105 to 125 (VVGS…AAVG). Residues G77 and T80 each coordinate Na(+).

The protein belongs to the fluoride channel Fluc/FEX (TC 1.A.43) family.

The protein resides in the cell inner membrane. The catalysed reaction is fluoride(in) = fluoride(out). With respect to regulation, na(+) is not transported, but it plays an essential structural role and its presence is essential for fluoride channel function. In terms of biological role, fluoride-specific ion channel. Important for reducing fluoride concentration in the cell, thus reducing its toxicity. The sequence is that of Fluoride-specific ion channel FluC from Opitutus terrae (strain DSM 11246 / JCM 15787 / PB90-1).